A 658-amino-acid chain; its full sequence is UvrABC system protein B (658 aa).

One can recognise a Helicase ATP-binding domain in the interval 25-416 (QFIHNGAQYS…QEHIAEQIIR (392 aa)). Residue 38–45 (GVTGSGKT) participates in ATP binding. The short motif at 91 to 114 (HFDYYQPEAYIPRRDLFIEKDSSI) is the Beta-hairpin element. The Helicase C-terminal domain occupies 433-607 (AVLDLYDEIK…ELKIESSGLS (175 aa)). One can recognise a UVR domain in the interval 623 to 658 (ESIIKELNIKMHQAAKALEFEEAARLRDEIARIRTM).

It belongs to the UvrB family. In terms of assembly, forms a heterotetramer with UvrA during the search for lesions. Interacts with UvrC in an incision complex.

The protein resides in the cytoplasm. The UvrABC repair system catalyzes the recognition and processing of DNA lesions. A damage recognition complex composed of 2 UvrA and 2 UvrB subunits scans DNA for abnormalities. Upon binding of the UvrA(2)B(2) complex to a putative damaged site, the DNA wraps around one UvrB monomer. DNA wrap is dependent on ATP binding by UvrB and probably causes local melting of the DNA helix, facilitating insertion of UvrB beta-hairpin between the DNA strands. Then UvrB probes one DNA strand for the presence of a lesion. If a lesion is found the UvrA subunits dissociate and the UvrB-DNA preincision complex is formed. This complex is subsequently bound by UvrC and the second UvrB is released. If no lesion is found, the DNA wraps around the other UvrB subunit that will check the other stand for damage. The chain is UvrABC system protein B from Helicobacter hepaticus (strain ATCC 51449 / 3B1).